A 355-amino-acid polypeptide reads, in one-letter code: Uroporphyrinogen decarboxylase (355 aa).

Substrate-binding positions include 23–27, Asp72, Tyr148, Ser203, and His321; that span reads RQAGR.

It belongs to the uroporphyrinogen decarboxylase family. As to quaternary structure, homodimer.

Its subcellular location is the cytoplasm. The catalysed reaction is uroporphyrinogen III + 4 H(+) = coproporphyrinogen III + 4 CO2. It functions in the pathway porphyrin-containing compound metabolism; protoporphyrin-IX biosynthesis; coproporphyrinogen-III from 5-aminolevulinate: step 4/4. Functionally, catalyzes the decarboxylation of four acetate groups of uroporphyrinogen-III to yield coproporphyrinogen-III. This chain is Uroporphyrinogen decarboxylase, found in Chloroflexus aurantiacus (strain ATCC 29366 / DSM 635 / J-10-fl).